The sequence spans 103 residues: Large ribosomal subunit protein bL21 (103 aa).

The protein belongs to the bacterial ribosomal protein bL21 family. As to quaternary structure, part of the 50S ribosomal subunit. Contacts protein L20.

This protein binds to 23S rRNA in the presence of protein L20. The sequence is that of Large ribosomal subunit protein bL21 from Polynucleobacter asymbioticus (strain DSM 18221 / CIP 109841 / QLW-P1DMWA-1) (Polynucleobacter necessarius subsp. asymbioticus).